We begin with the raw amino-acid sequence, 553 residues long: Glycine betaine/proline/choline transporter VP1723 (553 aa).

A run of 12 helical transmembrane segments spans residues 43–63 (NRVF…TLTF), 85–105 (FFLA…VTPL), 122–142 (AGWL…FFGV), 191–211 (WALH…IFSF), 231–251 (VWGW…VFGL), 278–298 (TQVV…VAGL), 310–330 (MILA…MAIL), 362–382 (WTAF…MFIA), 393–413 (FIIC…TAFG), 443–463 (VMPF…VFFI), 490–510 (VFWC…GGLA), and 515–535 (MAVT…VSLI).

This sequence belongs to the BCCT transporter (TC 2.A.15) family.

The protein localises to the cell inner membrane. Its function is as follows. Involved in the uptake of osmoprotectants. Can transport glycine betaine, proline and choline. This Vibrio parahaemolyticus serotype O3:K6 (strain RIMD 2210633) protein is Glycine betaine/proline/choline transporter VP1723.